We begin with the raw amino-acid sequence, 291 residues long: Undecaprenyl-diphosphatase 2 (291 aa).

Transmembrane regions (helical) follow at residues 39 to 59 (PGAA…LIYF), 85 to 105 (AQMG…GVTL), 118 to 138 (ITAT…RLAA), 203 to 223 (FLLA…DAAA), 231 to 251 (PTVF…AWFM), and 262 to 282 (FVWY…TGAL).

Belongs to the UppP family.

Its subcellular location is the cell membrane. It catalyses the reaction di-trans,octa-cis-undecaprenyl diphosphate + H2O = di-trans,octa-cis-undecaprenyl phosphate + phosphate + H(+). Catalyzes the dephosphorylation of undecaprenyl diphosphate (UPP). Confers resistance to bacitracin. The chain is Undecaprenyl-diphosphatase 2 from Streptomyces avermitilis (strain ATCC 31267 / DSM 46492 / JCM 5070 / NBRC 14893 / NCIMB 12804 / NRRL 8165 / MA-4680).